Consider the following 493-residue polypeptide: MSFKDLRSFIDHLEANGELKRISYPVDPHLEMTEIADRVLRAKGPALLFENPKDHHMPVLVNLFGTPKRVAMALGKDDPLALREVGELLAFLKEPEPPRGFKDAIAKIPMFKQALNMPPKTVRNPPCQQVIKTGDEVDLTQLPIQHCWPGDVAPLVTWGLTITKGPRKSRQNLGIYRQQLLGKNKLIMRWLSHRGGALDFADFKQQFPGERYPVVVALGADPVTILGAVTPVPDSMSEYAFAGLLRGERTEVCKALSCDLEVPATSEIILEGYIGPEELAEEGPYGDHTGYYNETDKFPVFTVTHITHRKDAIYHSTYTGRPPDEPAMLGVALNEVFVPILRKQYPEIVDFYLPPEGCSYRMAVISIRKQYPGHAKRVMMGAWSFLRQFMYTKFIVIVDEDVNCRDWQDVIWAITTRMDPKRDTVMIENTPIDYLDFASPVAGLGSKMGLDATNKWEGETNREWGTPIVMDPKVKQKIDSIWDELGIDDSPTL.

Asparagine 172 contributes to the Mn(2+) binding site. Prenylated FMN-binding positions include 175–177, 189–191, and 194–195; these read IYR, RWL, and RG. Glutamate 238 provides a ligand contact to Mn(2+). Catalysis depends on aspartate 287, which acts as the Proton donor.

This sequence belongs to the UbiD family. In terms of assembly, homohexamer. Prenylated FMN serves as cofactor. Mn(2+) is required as a cofactor.

The protein resides in the cell membrane. It catalyses the reaction a 4-hydroxy-3-(all-trans-polyprenyl)benzoate + H(+) = a 2-(all-trans-polyprenyl)phenol + CO2. Its pathway is cofactor biosynthesis; ubiquinone biosynthesis. In terms of biological role, catalyzes the decarboxylation of 3-octaprenyl-4-hydroxy benzoate to 2-octaprenylphenol, an intermediate step in ubiquinone biosynthesis. The chain is 3-octaprenyl-4-hydroxybenzoate carboxy-lyase from Shewanella baltica (strain OS155 / ATCC BAA-1091).